We begin with the raw amino-acid sequence, 1067 residues long: Tricorn protease homolog 1 (1067 aa).

The interval 518-551 is disordered; that stretch reads TTPSPFGPQRHGRPFETPDREETPDSEGTPTTRI. Residues 530-540 are compositionally biased toward basic and acidic residues; the sequence is RPFETPDREET. His740 acts as the Charge relay system in catalysis. A PDZ-like region spans residues 754-851; sequence RQGLLGADLS…HAVVVPLADE (98 aa). Substrate is bound at residue Gly914. Ser961 acts as the Nucleophile in catalysis. Glu1019 functions as the Charge relay system in the catalytic mechanism.

This sequence belongs to the peptidase S41B family. As to quaternary structure, forms a homohexameric complex; it is not known if it assembles into higher-order structures.

Its subcellular location is the cytoplasm. With respect to regulation, stimulated by MgCl2. Degrades oligopeptides in a sequential manner. The sequence is that of Tricorn protease homolog 1 (tri1) from Streptomyces coelicolor (strain ATCC BAA-471 / A3(2) / M145).